Reading from the N-terminus, the 938-residue chain is Auxilin (938 aa).

Positions 19–41 (AAAGENRMKDSENKGASSPDMEP) are disordered. 3 repeat units span residues 61 to 64 (NLKD), 65 to 68 (NLKD), and 69 to 72 (TLKD). A 3 X 4 AA approximate tandem repeats region spans residues 61 to 72 (NLKDNLKDTLKD). Residues 80 to 247 (SVSSYTKGDL…GYMCDLLADK (168 aa)) form the Phosphatase tensin-type domain. Serine 137 is subject to Phosphoserine. The active-site Phosphocysteine intermediate is the cysteine 189. In terms of domain architecture, C2 tensin-type spans 253-391 (FKPLTIKAIT…FQVTLDIEVQ (139 aa)). Positions 434–442 (PADLPPDHP) match the SH3-binding motif. The disordered stretch occupies residues 467–801 (EEDHAALVNQ…GKGSTNLEGK (335 aa)). 2 positions are modified to phosphoserine: serine 478 and serine 481. Over residues 531-548 (DVSTNFSSLAAPPSNSEL) the composition is skewed to polar residues. Over residues 559–569 (TGPAQAGQAGV) the composition is skewed to low complexity. Polar residues-rich tracts occupy residues 579 to 596 (VSAQ…SASP) and 624 to 654 (FLNT…TPAV). The residue at position 595 (serine 595) is a Phosphoserine. The segment covering 679 to 694 (SAATSPTGSSHGTPTH) has biased composition (low complexity). Residues 754–781 (NWQQTQSKPQSSMPHSSPQNRPNYNVSF) are compositionally biased toward polar residues. The 65-residue stretch at 874 to 938 (TKWKPVGMAD…FENQGQKPLY (65 aa)) folds into the J domain.

In terms of assembly, forms a complex composed of HSPA8, CLTC and DNAJC6. Interacts with HSPA8/HSC70 in an ATP-dependent manner; this interaction stimulates the HSPA8's ATPase activity. Interacts with CLTC; this interaction produces a local change in heavy-chain contacts, creating a detectable global distortion of the clathrin coat. Interacts with AP2A2. Interacts with DNM1(GTP-bound form); this interaction allows clathrin-coated vesicle (CCV) formation at the plasma membrane. In terms of processing, the N-terminus is blocked. Post-translationally, phosphorylation at Ser-595 modulates its ability to bind CLTC and therefore the synaptic vesicle endocytosis (SVE).

Its subcellular location is the cytoplasmic vesicle. The protein localises to the clathrin-coated vesicle. May act as a protein phosphatase and/or a lipid phosphatase. Co-chaperone that recruits HSPA8/HSC70 to clathrin-coated vesicles (CCVs) and promotes the ATP-dependent dissociation of clathrin from CCVs and participates in clathrin-mediated endocytosis of synaptic vesicles and their recycling and also in intracellular trafficking. Firstly, binds tightly to the clathrin cages, at a ratio of one DNAJC6 per clathrin triskelion. The HSPA8:ATP complex then binds to the clathrin-auxilin cage, initially at a ratio of one HSPA8 per triskelion leading to ATP hydrolysis stimulation and causing a conformational change in the HSPA8. This cycle is repeated three times to drive to a complex containing the clathrin-auxilin cage associated to three HSPA8:ADP complex. The ATP hydrolysis of the third HSPA8:ATP complex leads to a concerted dismantling of the cage into component triskelia. Then, dissociates from the released triskelia and be recycled to initiate another cycle of HSPA8's recruitment. Also acts during the early steps of clathrin-coated vesicle (CCV) formation through its interaction with the GTP bound form of DNM1. This chain is Auxilin, found in Mus musculus (Mouse).